The primary structure comprises 279 residues: Thymidylate synthase (279 aa).

141 to 142 contacts dUMP; sequence RR. Catalysis depends on Cys161, which acts as the Nucleophile. DUMP contacts are provided by residues 181–184, Asn192, and 222–224; these read RSND and HVY. Asp184 is a (6R)-5,10-methylene-5,6,7,8-tetrahydrofolate binding site. Ala278 lines the (6R)-5,10-methylene-5,6,7,8-tetrahydrofolate pocket.

Belongs to the thymidylate synthase family. Bacterial-type ThyA subfamily. In terms of assembly, homodimer.

The protein localises to the cytoplasm. It catalyses the reaction dUMP + (6R)-5,10-methylene-5,6,7,8-tetrahydrofolate = 7,8-dihydrofolate + dTMP. It participates in pyrimidine metabolism; dTTP biosynthesis. Functionally, catalyzes the reductive methylation of 2'-deoxyuridine-5'-monophosphate (dUMP) to 2'-deoxythymidine-5'-monophosphate (dTMP) while utilizing 5,10-methylenetetrahydrofolate (mTHF) as the methyl donor and reductant in the reaction, yielding dihydrofolate (DHF) as a by-product. This enzymatic reaction provides an intracellular de novo source of dTMP, an essential precursor for DNA biosynthesis. In Bacillus subtilis subsp. natto, this protein is Thymidylate synthase.